A 225-amino-acid polypeptide reads, in one-letter code: Protein-L-isoaspartate O-methyltransferase (225 aa).

Residues 57–60 (ATVS), H65, S89, 110–111 (EH), 142–143 (DG), T216, and Q221 contribute to the S-adenosyl-L-homocysteine site. Residue S60 is part of the active site.

This sequence belongs to the methyltransferase superfamily. L-isoaspartyl/D-aspartyl protein methyltransferase family. As to quaternary structure, monomer.

It localises to the cytoplasm. The protein resides in the cytosol. It carries out the reaction [protein]-L-isoaspartate + S-adenosyl-L-methionine = [protein]-L-isoaspartate alpha-methyl ester + S-adenosyl-L-homocysteine. Its function is as follows. Initiates the repair of damaged proteins by catalyzing methyl esterification of L-isoaspartyl and D-aspartyl residues produced by spontaneous isomerization and racemization of L-aspartyl and L-asparaginyl residues in aging peptides and proteins. In Caenorhabditis elegans, this protein is Protein-L-isoaspartate O-methyltransferase (pcm-1).